Reading from the N-terminus, the 170-residue chain is Calcineurin subunit B type 2 (170 aa).

G2 carries the N-myristoyl glycine lipid modification. EF-hand domains lie at 18–46 (DEIK…FMSL), 50–85 (RHNP…FSVK), 87–122 (DEEQ…MVGN), and 128–163 (QLQQ…LEIH). Positions 31, 33, 35, 37, 42, 63, 65, 67, 69, 74, 100, 102, 104, 106, and 111 each coordinate Ca(2+). Residues 131–136 (QLVDKT) form a calcineurin A binding region. Residues D141, D143, D145, K147, and E152 each contribute to the Ca(2+) site.

This sequence belongs to the calcineurin regulatory subunit family. In terms of assembly, forms a complex composed of a calmodulin-dependent catalytic subunit (also known as calcineurin A) and a regulatory Ca(2+)-binding subunit (also known as calcineurin B). There are three catalytic subunits, each encoded by a separate gene (PPP3CA, PPP3CB, and PPP3CC) and two regulatory subunits which are also encoded by separate genes (PPP3R1 and PPP3R2). Interacts with SPATA33 (via PQIIIT motif). Testis-specific.

Its subcellular location is the mitochondrion. Its function is as follows. Regulatory subunit of calcineurin, a calcium-dependent, calmodulin stimulated protein phosphatase. Confers calcium sensitivity. This chain is Calcineurin subunit B type 2 (PPP3R2), found in Homo sapiens (Human).